The chain runs to 267 residues: Membrane-spanning 4-domains subfamily A member 12 (267 aa).

Over methionine 1 to leucine 91 the chain is Cytoplasmic. A helical membrane pass occupies residues glycine 92–isoleucine 112. The Extracellular portion of the chain corresponds to serine 113 to leucine 120. A helical transmembrane segment spans residues glycine 121 to isoleucine 141. The Cytoplasmic segment spans residues serine 142–glycine 160. Residues serine 161–valine 181 traverse the membrane as a helical segment. Residues aspartate 182 to lysine 200 are Extracellular-facing. A helical membrane pass occupies residues glycine 201 to alanine 221. Residues histidine 222–lysine 267 lie on the Cytoplasmic side of the membrane. The tract at residues threonine 248–lysine 267 is disordered.

It belongs to the MS4A family.

The protein resides in the membrane. May be involved in signal transduction as a component of a multimeric receptor complex. In Homo sapiens (Human), this protein is Membrane-spanning 4-domains subfamily A member 12 (MS4A12).